The primary structure comprises 321 residues: Ribose-phosphate pyrophosphokinase (321 aa).

Residues 44-46 and 103-104 each bind ATP; these read DGE and RQ. The Mg(2+) site is built by His-137 and Asp-179. Lys-202 is an active-site residue. Residues Arg-204, Asp-228, and 232–236 each bind D-ribose 5-phosphate; that span reads DTAGT.

The protein belongs to the ribose-phosphate pyrophosphokinase family. Class I subfamily. In terms of assembly, homohexamer. Requires Mg(2+) as cofactor.

The protein resides in the cytoplasm. It carries out the reaction D-ribose 5-phosphate + ATP = 5-phospho-alpha-D-ribose 1-diphosphate + AMP + H(+). It functions in the pathway metabolic intermediate biosynthesis; 5-phospho-alpha-D-ribose 1-diphosphate biosynthesis; 5-phospho-alpha-D-ribose 1-diphosphate from D-ribose 5-phosphate (route I): step 1/1. Functionally, involved in the biosynthesis of the central metabolite phospho-alpha-D-ribosyl-1-pyrophosphate (PRPP) via the transfer of pyrophosphoryl group from ATP to 1-hydroxyl of ribose-5-phosphate (Rib-5-P). This chain is Ribose-phosphate pyrophosphokinase, found in Staphylococcus aureus (strain COL).